We begin with the raw amino-acid sequence, 400 residues long: Multidrug resistance protein 2 (400 aa).

A run of 11 helical transmembrane segments spans residues Ile-11 to Pro-31, Thr-46 to Gly-66, Ile-78 to Val-98, Ile-106 to Ile-126, Ala-142 to Ile-162, Met-164 to Leu-184, Ile-213 to Ala-233, Ile-253 to Gly-273, Phe-297 to Leu-317, Ser-346 to Leu-366, and Ile-368 to Val-388.

Belongs to the major facilitator superfamily. TCR/Tet family.

Its subcellular location is the cell membrane. In terms of biological role, energy-dependent efflux pump responsible for decreased drug accumulation in multi-drug-resistant cells. Probably uses a transmembrane proton gradient as the energy source. Causes the efflux of a variety of toxic substances, including such structurally diverse compounds as ethidium bromide, rhodamine and acridine dyes, tetraphenylphosphonium, puromycin, chloramphenicol, doxorubicin, and fluoroquinolone antibiotics. This is Multidrug resistance protein 2 (blt) from Bacillus subtilis (strain 168).